The following is a 122-amino-acid chain: Large ribosomal subunit protein uL14 (122 aa).

It belongs to the universal ribosomal protein uL14 family. In terms of assembly, part of the 50S ribosomal subunit. Forms a cluster with proteins L3 and L19. In the 70S ribosome, L14 and L19 interact and together make contacts with the 16S rRNA in bridges B5 and B8.

Functionally, binds to 23S rRNA. Forms part of two intersubunit bridges in the 70S ribosome. This chain is Large ribosomal subunit protein uL14, found in Rickettsia massiliae (strain Mtu5).